The following is a 219-amino-acid chain: Suppressor-of-stellate-like protein (219 aa).

Positions 194–219 (SAESPPIKVESSVSKSPSWLRNVPNF) are disordered. Over residues 204-219 (SSVSKSPSWLRNVPNF) the composition is skewed to polar residues.

Belongs to the casein kinase 2 subunit beta family.

In Drosophila melanogaster (Fruit fly), this protein is Suppressor-of-stellate-like protein (Ssl).